The following is an 87-amino-acid chain: Phospholemman (87 aa).

The signal sequence occupies residues 1–20 (MASLSHILVLWVGILTVVNA). Residues 21 to 35 (EAPQEHDPFTYDYQS) lie on the Extracellular side of the membrane. A helical transmembrane segment spans residues 36–56 (LRIGGLIIAGILFILGILIVL). The Cytoplasmic portion of the chain corresponds to 57-87 (SRRCRCKFNQQQSLGKMRSPHLAAQFSSESC). Cysteine 60 carries the S-palmitoyl cysteine lipid modification. Position 62 is an S-glutathionyl cysteine; alternate (cysteine 62). A lipid anchor (S-palmitoyl cysteine; alternate) is attached at cysteine 62. Serine 75 carries the post-translational modification Phosphoserine; by PKA and PKC. Position 83 is a phosphoserine; by PKA (serine 83).

This sequence belongs to the FXYD family. Homotetramer. Monomer. Regulatory subunit of the sodium/potassium-transporting ATPase (NKA) which is composed of a catalytic alpha subunit, a non-catalytic beta subunit and an additional regulatory subunit. The monomeric form associates with NKA while the oligomeric form does not. Interacts with the catalytic alpha-1 subunit ATP1A1. Also interacts with the catalytic alpha-2 and alpha-3 subunits ATP1A2 and ATP1A3. Very little interaction with ATP1A1, ATP1A2 or ATP1A3 when phosphorylated at Ser-83. Interacts with the non-catalytic beta-1 subunit ATP1B1. Oxidative stress decreases interaction with ATP1A1 but increases interaction with ATP1B1. In terms of processing, major plasma membrane substrate for cAMP-dependent protein kinase (PKA) and protein kinase C (PKC) in several different tissues. Phosphorylated in response to insulin and adrenergic stimulation. Phosphorylation at Ser-83 stimulates sodium/potassium-transporting ATPase activity while the unphosphorylated form inhibits sodium/potassium-transporting ATPase activity. Phosphorylation increases tetramerization, decreases binding to ATP1A1 and reduces inhibition of ATP1A1 activity. Phosphorylation at Ser-75 leads to greatly reduced interaction with ATP1A1, ATP1A2 and ATP1A3. May be phosphorylated by DMPK. Post-translationally, palmitoylation increases half-life and stability and is enhanced upon phosphorylation at Ser-83 by PKA.

Its subcellular location is the cell membrane. It localises to the sarcolemma. It is found in the apical cell membrane. The protein resides in the membrane. The protein localises to the caveola. Its subcellular location is the T-tubule. In terms of biological role, associates with and regulates the activity of the sodium/potassium-transporting ATPase (NKA) which transports Na(+) out of the cell and K(+) into the cell. Inhibits NKA activity in its unphosphorylated state and stimulates activity when phosphorylated. Reduces glutathionylation of the NKA beta-1 subunit ATP1B1, thus reversing glutathionylation-mediated inhibition of ATP1B1. Contributes to female sexual development by maintaining the excitability of neurons which secrete gonadotropin-releasing hormone. In Sus scrofa (Pig), this protein is Phospholemman.